Here is a 165-residue protein sequence, read N- to C-terminus: Small ribosomal subunit protein uS5 (165 aa).

Positions 10 to 73 constitute an S5 DRBM domain; it reads LKEKVVFINR…EDAKKHLVEV (64 aa).

The protein belongs to the universal ribosomal protein uS5 family. In terms of assembly, part of the 30S ribosomal subunit. Contacts proteins S4 and S8.

In terms of biological role, with S4 and S12 plays an important role in translational accuracy. Located at the back of the 30S subunit body where it stabilizes the conformation of the head with respect to the body. The protein is Small ribosomal subunit protein uS5 of Clostridium novyi (strain NT).